A 340-amino-acid polypeptide reads, in one-letter code: MITIRDVARQAGVSVATVSRVLNNSALVSPDTRDAVMQAVTLLGYRPNANAQALATQVSDTIGVVVMDVSDAFFGALVKAVDLVAQQHQKYVLIGNSYHEAEKERHAIEVLIRQRCNALIVHSKALTDRELSDFMDQIPGMVLINRIVPGYAHRCVCLDNVSGARMATRMLLNNGHQRIGYLASSHRIEDDAMRREGWLHALQEQGIAASESWIGTGTPDMQGGESAMVELLGRNLQLTAVFAYNDNMAAGALTALKDNGIAIPLHLSVIGFDDIPIARYTDPQLTTVRYPIASMAKIATELALQGAAGTLDITATHCFMPTLVRRHSVAWRQNAVLITN.

One can recognise an HTH lacI-type domain in the interval 1 to 56; sequence MITIRDVARQAGVSVATVSRVLNNSALVSPDTRDAVMQAVTLLGYRPNANAQALAT. The segment at residues 4–23 is a DNA-binding region (H-T-H motif); the sequence is IRDVARQAGVSVATVSRVLN.

Homodimer.

In terms of biological role, repressor of the mgl operon. Binds galactose and D-fucose as inducers. GalS binds to an operator DNA sequence within its own coding sequence. This chain is HTH-type transcriptional regulator GalS (galS), found in Salmonella typhimurium (strain LT2 / SGSC1412 / ATCC 700720).